We begin with the raw amino-acid sequence, 135 residues long: Poly [ADP-ribose] polymerase 1 (135 aa).

The PARP alpha-helical domain maps to 1-21; it reads QAKVEMLDNLLDIEVAYSLLK. The PARP catalytic domain occupies 30–135; the sequence is DPIDINYEKL…APVTGYMFGK (106 aa). NAD(+) is bound by residues 104–106, Gly113, and Arg120; that span reads HGS. The active site involves Lys135.

It belongs to the ARTD/PARP family. In terms of assembly, homodimer; PARP-type zinc-fingers from separate parp1 molecules form a dimer module that specifically recognizes DNA strand breaks. In terms of processing, poly-ADP-ribosylated on serine, glutamate and aspartate residues by autocatalysis. Auto-ADP-ribosylation on serine takes place following interaction with HPF1. Auto poly-ADP-ribosylation on serine residues promotes its dissociation from chromatin.

It localises to the chromosome. The protein resides in the nucleus. Its subcellular location is the nucleolus. It is found in the cytoplasm. The protein localises to the cytosol. It catalyses the reaction NAD(+) + (ADP-D-ribosyl)n-acceptor = nicotinamide + (ADP-D-ribosyl)n+1-acceptor + H(+).. It carries out the reaction L-seryl-[protein] + NAD(+) = O-(ADP-D-ribosyl)-L-seryl-[protein] + nicotinamide + H(+). The enzyme catalyses L-aspartyl-[protein] + NAD(+) = 4-O-(ADP-D-ribosyl)-L-aspartyl-[protein] + nicotinamide. The catalysed reaction is L-glutamyl-[protein] + NAD(+) = 5-O-(ADP-D-ribosyl)-L-glutamyl-[protein] + nicotinamide. It catalyses the reaction L-tyrosyl-[protein] + NAD(+) = O-(ADP-D-ribosyl)-L-tyrosyl-[protein] + nicotinamide + H(+). It carries out the reaction L-histidyl-[protein] + NAD(+) = N(tele)-(ADP-D-ribosyl)-L-histidyl-[protein] + nicotinamide + H(+). ADP-ribosyltransferase activity is regulated via an allosteric activation mechanism. In absence of activation signal, parp1 is autoinhibited by the PARP alpha-helical domain (also named HD region), which prevents effective NAD(+)-binding. Activity is highly stimulated by signals, such as DNA strand breaks. Binding to damaged DNA unfolds the PARP alpha-helical domain, relieving autoinhibition. Poly-ADP-ribosyltransferase activity is tightly regulated and parp1 is removed from damaged chromatin following initial poly-ADP-ribosylation of chromatin to avoid prolonged residence (trapping) that has cytotoxic consequences. A number of factors or post-translational modifications (auto-poly-ADP-ribosylation) promote parp1 removal from chromatin. Functionally, poly-ADP-ribosyltransferase that mediates poly-ADP-ribosylation of proteins and plays a key role in DNA repair. Mediates glutamate, aspartate, serine, histidine or tyrosine ADP-ribosylation of proteins: the ADP-D-ribosyl group of NAD(+) is transferred to the acceptor carboxyl group of target residues and further ADP-ribosyl groups are transferred to the 2'-position of the terminal adenosine moiety, building up a polymer with an average chain length of 20-30 units. Serine ADP-ribosylation of proteins constitutes the primary form of ADP-ribosylation of proteins in response to DNA damage. Specificity for the different amino acids is conferred by interacting factors, such as hpf1 and nmnat1. Following interaction with hpf1, catalyzes serine ADP-ribosylation of target proteins; hpf1 confers serine specificity by completing the parp1 active site. Also catalyzes tyrosine ADP-ribosylation of target proteins following interaction with hpf1. Following interaction with nmnat1, catalyzes glutamate and aspartate ADP-ribosylation of target proteins; nmnat1 confers glutamate and aspartate specificity. Parp1 initiates the repair of DNA breaks: recognizes and binds DNA breaks within chromatin and recruits hpf1, licensing serine ADP-ribosylation of target proteins, such as histones (H2BS6ADPr and H3S10ADPr), thereby promoting decompaction of chromatin and the recruitment of repair factors leading to the reparation of DNA strand breaks. In addition to base excision repair (BER) pathway, also involved in double-strand breaks (DSBs) repair. Mediates the poly-ADP-ribosylation of a number of proteins. In addition to proteins, also able to ADP-ribosylate DNA: catalyzes ADP-ribosylation of DNA strand break termini containing terminal phosphates and a 2'-OH group in single- and double-stranded DNA, respectively. Parp1-mediated DNA repair in neurons plays a role in sleep: senses DNA damage in neurons and promotes sleep, facilitating efficient DNA repair. In addition to DNA repair, also involved in other processes, such as transcription regulation, programmed cell death, membrane repair, adipogenesis and innate immunity. Acts as a repressor of transcription: binds to nucleosomes and modulates chromatin structure in a manner similar to histone H1, thereby altering RNA polymerase II. Acts both as a positive and negative regulator of transcription elongation, depending on the context. Poly-ADP-ribose chains generated by parp1 also play a role in poly-ADP-ribose-dependent cell death, a process named parthanatos. Also acts as a negative regulator of the cGAS-STING pathway by mediating poly-ADP-ribosylation and inactivation of cgas. Acts as a negative regulator of adipogenesis by catalyzing poly ADP-ribosylation of histone H2B on 'Glu-35' (H2BE35ADPr). This Oncorhynchus masou (Cherry salmon) protein is Poly [ADP-ribose] polymerase 1 (parp1).